We begin with the raw amino-acid sequence, 206 residues long: Small ribosomal subunit protein uS4 (206 aa).

A disordered region spans residues 18–46 (NIWGRPKSPVNRREYGPGQHGQRRKGKLS). Positions 94–156 (RRLDAVVYRA…SKQNVAVLEA (63 aa)) constitute an S4 RNA-binding domain.

It belongs to the universal ribosomal protein uS4 family. Part of the 30S ribosomal subunit. Contacts protein S5. The interaction surface between S4 and S5 is involved in control of translational fidelity.

One of the primary rRNA binding proteins, it binds directly to 16S rRNA where it nucleates assembly of the body of the 30S subunit. Its function is as follows. With S5 and S12 plays an important role in translational accuracy. The chain is Small ribosomal subunit protein uS4 from Ruegeria sp. (strain TM1040) (Silicibacter sp.).